The sequence spans 514 residues: MITSRLLVYVAVLVLCVIKVSSRDTFIAAVYEHAVKLPNATLVPVSHEEALAVMNQNLDLLEAAITSAANQGAHIIVTPEDGIYGWNFSRETIYPYLEDIPDPGVNWIPCNNPKRFGYTPVQERLSCLAKDNSIYVVANIGDKKPCNASDSQCPLDGRYQYNTDVVFDSQGKLVARYHKHNLFMGENQFNVPKKPEIVTFDTIFGRFGVFTCFDILFYDPAVTLVKDFHVDTIVFPTAWMNVLPHLSAIQFHSAWAMGMGVNFLASNIHHPSKRMTGSGIYAPDSPRAFHYDMKTKEGKLLLSQLDSYTHHPIVVNWTSYASGIKAFPTENQEFTGTAFFDEFTFLELTRVTGNYTVCQKKLCCHLSYKMSEKRTDEVYALGAFDGLHVVEGRYYLQICTLLKCKTAHVHTCGGAVETASTRFDMFSLSGTFGTQYVFPEVLLSETQLAPGEFQVSSDGRLFSMKPLSGPLLTVTLFGRIYEKDQTLKASSDPRSQVPGVMLLVIIPIVCSLSW.

A signal peptide spans 1 to 22; that stretch reads MITSRLLVYVAVLVLCVIKVSS. Asn39 carries N-linked (GlcNAc...) asparagine glycosylation. The region spanning 40 to 307 is the CN hydrolase domain; sequence ATLVPVSHEE…GKLLLSQLDS (268 aa). Glu80 serves as the catalytic Proton acceptor. N-linked (GlcNAc...) asparagine glycans are attached at residues Asn87 and Asn147. Catalysis depends on Lys179, which acts as the Proton donor. The active-site Nucleophile is the Cys212. Residues Asn316 and Asn354 are each glycosylated (N-linked (GlcNAc...) asparagine). Residue Asp492 is the site of GPI-anchor amidated aspartate attachment. Positions 493–514 are cleaved as a propeptide — removed in mature form; sequence PRSQVPGVMLLVIIPIVCSLSW.

Belongs to the carbon-nitrogen hydrolase superfamily. BTD/VNN family. In terms of assembly, monomer.

The protein localises to the cell membrane. The catalysed reaction is (R)-pantetheine + H2O = cysteamine + (R)-pantothenate. Amidohydrolase that hydrolyzes specifically one of the carboamide linkages in D-pantetheine thus recycling pantothenic acid (vitamin B5) and releasing cysteamine. This Canis lupus familiaris (Dog) protein is Pantetheinase (VNN1).